The following is a 347-amino-acid chain: GMP reductase (347 aa).

An NADP(+)-binding site is contributed by 108–131 (ADFAKTAQILALNPALNFVCIDVA). 2 residues coordinate K(+): Gly181 and Gly183. Catalysis depends on Cys186, which acts as the Thioimidate intermediate. 216 to 239 (IVSDGGCTMPGDVAKAFGGGADFV) is a binding site for NADP(+).

It belongs to the IMPDH/GMPR family. GuaC type 1 subfamily. Homotetramer.

The catalysed reaction is IMP + NH4(+) + NADP(+) = GMP + NADPH + 2 H(+). In terms of biological role, catalyzes the irreversible NADPH-dependent deamination of GMP to IMP. It functions in the conversion of nucleobase, nucleoside and nucleotide derivatives of G to A nucleotides, and in maintaining the intracellular balance of A and G nucleotides. The polypeptide is GMP reductase (Salmonella arizonae (strain ATCC BAA-731 / CDC346-86 / RSK2980)).